The chain runs to 351 residues: Aromatic amino acid aminotransferase (351 aa).

At Lys-215 the chain carries N6-(pyridoxal phosphate)lysine.

It belongs to the class-II pyridoxal-phosphate-dependent aminotransferase family. In terms of assembly, homodimer. The cofactor is pyridoxal 5'-phosphate.

It catalyses the reaction an aromatic L-alpha-amino acid + 2-oxoglutarate = an aromatic oxo-acid + L-glutamate. Its function is as follows. Aminotransferase that catalyzes the conversion of aromatic amino acids and 2-oxoglutarate into corresponding aromatic oxo acids and L-glutamate. This chain is Aromatic amino acid aminotransferase, found in Mycolicibacterium vanbaalenii (strain DSM 7251 / JCM 13017 / BCRC 16820 / KCTC 9966 / NRRL B-24157 / PYR-1) (Mycobacterium vanbaalenii).